A 630-amino-acid chain; its full sequence is uncharacterized protein (630 aa).

The next 2 membrane-spanning stretches (helical) occupy residues 8 to 28 and 258 to 278; these read LFNMFRLLAAILVFTGLASAV and VDNSFLYTFAPYVFSSAPLVI. The interval 399 to 426 is disordered; that stretch reads EETSKPTEQPSPADSTSTPAAPEKGAAS. Residues 404-417 show a composition bias toward polar residues; it reads PTEQPSPADSTSTP.

It belongs to the peptidase S1C family.

It is found in the cell membrane. This is an uncharacterized protein from Sinorhizobium fredii (strain NBRC 101917 / NGR234).